Here is a 111-residue protein sequence, read N- to C-terminus: Nucleoid-associated protein TTE0040 (111 aa).

This sequence belongs to the YbaB/EbfC family. As to quaternary structure, homodimer.

The protein localises to the cytoplasm. Its subcellular location is the nucleoid. Functionally, binds to DNA and alters its conformation. May be involved in regulation of gene expression, nucleoid organization and DNA protection. This is Nucleoid-associated protein TTE0040 from Caldanaerobacter subterraneus subsp. tengcongensis (strain DSM 15242 / JCM 11007 / NBRC 100824 / MB4) (Thermoanaerobacter tengcongensis).